A 348-amino-acid polypeptide reads, in one-letter code: Protein-arginine N-acetylglucosaminyltransferase SseK2 (348 aa).

Residues 64-66 (QWF), Tyr88, and 237-240 (YLDA) each bind UDP-N-acetyl-alpha-D-glucosamine. Residues 239–241 (DAD) carry the DXD motif motif. Position 241 (Asp241) interacts with Mn(2+). Glu271 (proton acceptor) is an active-site residue. Residues Asn338, Ser340, and 345 to 348 (SSWR) contribute to the UDP-N-acetyl-alpha-D-glucosamine site. Asn338 and Ser340 together coordinate Mn(2+).

Belongs to the glycosyltransferase NleB family. Requires Mn(2+) as cofactor.

It localises to the secreted. The protein resides in the host Golgi apparatus. It carries out the reaction L-arginyl-[protein] + UDP-N-acetyl-alpha-D-glucosamine = N(omega)-(N-acetyl-beta-D-glucosaminyl)-L-arginyl-[protein] + UDP + H(+). Its activity is regulated as follows. Protein-arginine N-acetylglucosaminyltransferase activity is inhibited by 100066N compound (flavone analog) and 102644N compound (a substituted isoxazole). Protein-arginine N-acetylglucosaminyltransferase effector that catalyzes the transfer of a single N-acetylglucosamine (GlcNAc) to a conserved arginine residue in the death domain of host proteins such as FADD: arginine GlcNAcylation prevents homotypic/heterotypic death domain interactions. Also acts on host proteins without a death domain: catalyzes arginine GlcNAcylation of host small Rab1 GTPase, thereby preventing GTPase activity and leading to impaired host vesicular protein transport. In contrast to Ssek1, not able to disrupt TNF signaling in infected cells. This chain is Protein-arginine N-acetylglucosaminyltransferase SseK2, found in Salmonella typhimurium (strain SL1344).